Here is a 163-residue protein sequence, read N- to C-terminus: Endoribonuclease YbeY (163 aa).

The Zn(2+) site is built by His123, His127, and His133.

Belongs to the endoribonuclease YbeY family. Requires Zn(2+) as cofactor.

The protein resides in the cytoplasm. In terms of biological role, single strand-specific metallo-endoribonuclease involved in late-stage 70S ribosome quality control and in maturation of the 3' terminus of the 16S rRNA. This is Endoribonuclease YbeY from Helicobacter hepaticus (strain ATCC 51449 / 3B1).